The following is a 206-amino-acid chain: Holliday junction branch migration complex subunit RuvA (206 aa).

The tract at residues 1–64 is domain I; it reads MIGKLKGTLD…EDMLRLYGFQ (64 aa). Residues 65-144 form a domain II region; the sequence is SALEREWFRL…AYAGAASGTI (80 aa). The tract at residues 145-154 is flexible linker; it reads GLKQELGEGV. The tract at residues 154 to 206 is domain III; sequence VAPAPITDAVSALVNLGYSRDTAANAVAAALKTAGEDADASKLIRFGLKELAR.

This sequence belongs to the RuvA family. Homotetramer. Forms an RuvA(8)-RuvB(12)-Holliday junction (HJ) complex. HJ DNA is sandwiched between 2 RuvA tetramers; dsDNA enters through RuvA and exits via RuvB. An RuvB hexamer assembles on each DNA strand where it exits the tetramer. Each RuvB hexamer is contacted by two RuvA subunits (via domain III) on 2 adjacent RuvB subunits; this complex drives branch migration. In the full resolvosome a probable DNA-RuvA(4)-RuvB(12)-RuvC(2) complex forms which resolves the HJ.

The protein localises to the cytoplasm. In terms of biological role, the RuvA-RuvB-RuvC complex processes Holliday junction (HJ) DNA during genetic recombination and DNA repair, while the RuvA-RuvB complex plays an important role in the rescue of blocked DNA replication forks via replication fork reversal (RFR). RuvA specifically binds to HJ cruciform DNA, conferring on it an open structure. The RuvB hexamer acts as an ATP-dependent pump, pulling dsDNA into and through the RuvAB complex. HJ branch migration allows RuvC to scan DNA until it finds its consensus sequence, where it cleaves and resolves the cruciform DNA. This chain is Holliday junction branch migration complex subunit RuvA, found in Mesorhizobium japonicum (strain LMG 29417 / CECT 9101 / MAFF 303099) (Mesorhizobium loti (strain MAFF 303099)).